The sequence spans 612 residues: MACPF domain-containing protein NSL1 (612 aa).

One can recognise an MACPF domain in the interval 5–338; the sequence is NFTRLDAHSA…PPIEELHQFL (334 aa).

Belongs to the complement C6/C7/C8/C9 (TC 1.C.39) family.

In terms of biological role, negatively controls the salicylic acid (SA)-mediated pathway of programmed cell death in plant immunity. This is MACPF domain-containing protein NSL1 (NSL1) from Arabidopsis thaliana (Mouse-ear cress).